The chain runs to 403 residues: G2/mitotic-specific cyclin-B1 (403 aa).

The protein belongs to the cyclin family. Cyclin AB subfamily. In terms of assembly, interacts with the CDC2 protein kinase to form a serine/threonine kinase holoenzyme complex also known as maturation promoting factor (MPF). The cyclin subunit imparts substrate specificity to the complex.

Essential for the control of the cell cycle at the G2/M (mitosis) transition. The polypeptide is G2/mitotic-specific cyclin-B1 (ccnb1) (Anguilla japonica (Japanese eel)).